Here is a 201-residue protein sequence, read N- to C-terminus: MTQRAGAAMLPSALLLLCVPGCLTVSGPSTVMGAVGESLSVQCRYEEKYKTFNKYWCRQPCLPIWHEMVETGGSEGVVRSDQVIITDHPGDLTFTVTLENLTADDAGKYRCGIATILQEDGLSGFLPDPFFQVQVLVSSASSTENSVKTPASPTRPSQCQGSLPSSTCFLLLPLLKVPLLLSILGAILWVNRPWRTPWTES.

Positions 1–24 (MTQRAGAAMLPSALLLLCVPGCLT) are cleaved as a signal peptide. The Ig-like V-type domain occupies 25-123 (VSGPSTVMGA…ATILQEDGLS (99 aa)). The Extracellular portion of the chain corresponds to 25 to 168 (VSGPSTVMGA…CQGSLPSSTC (144 aa)). A disulfide bridge links Cys43 with Cys111. Asn100 carries an N-linked (GlcNAc...) asparagine glycan. A helical transmembrane segment spans residues 169–189 (FLLLPLLKVPLLLSILGAILW). The Cytoplasmic portion of the chain corresponds to 190–201 (VNRPWRTPWTES).

Belongs to the CD300 family. As to quaternary structure, interacts with TYROBP and HCST. Expressed on CD16+ monocytes and myeloid dendritic cells (at protein level). By contrast, not detected in lymphocytes nor granulocytes (at protein level).

The protein localises to the membrane. Its subcellular location is the secreted. May play an important role in innate immunity by mediating a signal for the production of a neutrophil chemoattractant. The protein is Protein CD300H of Homo sapiens (Human).